Reading from the N-terminus, the 632-residue chain is 2-hydroxyacyl-CoA lyase 2 (632 aa).

A helical transmembrane segment spans residues 10–30 (AWGFFSSFLLLAFGTLVAALL). Position 98 (Glu98) interacts with thiamine diphosphate. The segment at 470-550 (DFVGTAAYLV…VMALIGNDAG (81 aa)) is thiamine pyrophosphate binding. Mg(2+) is bound by residues Asp521 and Asn547.

The protein belongs to the TPP enzyme family. It depends on Mg(2+) as a cofactor. Thiamine diphosphate serves as cofactor.

The protein resides in the endoplasmic reticulum membrane. It catalyses the reaction 2-hydroxyoctadecanoyl-CoA = heptadecanal + formyl-CoA. It carries out the reaction (2R)-hydroxyhexadecanoyl-CoA = pentadecanal + formyl-CoA. Functionally, endoplasmic reticulum 2-OH acyl-CoA lyase involved in the cleavage (C1 removal) reaction in the fatty acid alpha-oxydation in a thiamine pyrophosphate (TPP)-dependent manner. Involved in the phytosphingosine degradation pathway. The protein is 2-hydroxyacyl-CoA lyase 2 (ILVBL) of Bos taurus (Bovine).